The sequence spans 104 residues: MQKIRRDDEIIVIAGKDKGKRGKVLKVLADDRLVIGGVNLVKRHTKPNPMAGVQGGIVEKEAPLHASNVAIFNGETNKADRVGFKVEDGKKIRVFKSTQKAVDA.

The protein belongs to the universal ribosomal protein uL24 family. In terms of assembly, part of the 50S ribosomal subunit.

One of two assembly initiator proteins, it binds directly to the 5'-end of the 23S rRNA, where it nucleates assembly of the 50S subunit. Functionally, one of the proteins that surrounds the polypeptide exit tunnel on the outside of the subunit. This chain is Large ribosomal subunit protein uL24, found in Pseudomonas entomophila (strain L48).